A 266-amino-acid polypeptide reads, in one-letter code: Putative pyruvate, phosphate dikinase regulatory protein (266 aa).

Residue G149–T156 participates in ADP binding.

It belongs to the pyruvate, phosphate/water dikinase regulatory protein family. PDRP subfamily.

It catalyses the reaction N(tele)-phospho-L-histidyl/L-threonyl-[pyruvate, phosphate dikinase] + ADP = N(tele)-phospho-L-histidyl/O-phospho-L-threonyl-[pyruvate, phosphate dikinase] + AMP + H(+). It carries out the reaction N(tele)-phospho-L-histidyl/O-phospho-L-threonyl-[pyruvate, phosphate dikinase] + phosphate + H(+) = N(tele)-phospho-L-histidyl/L-threonyl-[pyruvate, phosphate dikinase] + diphosphate. Functionally, bifunctional serine/threonine kinase and phosphorylase involved in the regulation of the pyruvate, phosphate dikinase (PPDK) by catalyzing its phosphorylation/dephosphorylation. The polypeptide is Putative pyruvate, phosphate dikinase regulatory protein (Geobacillus thermodenitrificans (strain NG80-2)).